The sequence spans 338 residues: Putative peptide import ATP-binding protein BMEII0863 (338 aa).

One can recognise an ABC transporter domain in the interval 10-263; it reads KGLRTVFRTR…PRHPYTMGLL (254 aa). Residue 43 to 50 participates in ATP binding; sequence GESGSGKS.

The protein belongs to the ABC transporter superfamily. In terms of assembly, the complex is composed of two ATP-binding proteins (BMEII0863 and BMEII0864), two transmembrane proteins (BMEII0860 and BMEII0861) and a solute-binding protein (BMEII0859).

Its subcellular location is the cell inner membrane. Functionally, probably part of an ABC transporter complex that could be involved in peptide import. Probably responsible for energy coupling to the transport system. The chain is Putative peptide import ATP-binding protein BMEII0863 from Brucella melitensis biotype 1 (strain ATCC 23456 / CCUG 17765 / NCTC 10094 / 16M).